The following is a 229-amino-acid chain: Adenine nucleotide translocase lysine N-methyltransferase (229 aa).

Positions 1–22 (MDQDDPAEALTELREKRLGLLE) are N-terminal sequence (NTS). Residues 20-42 (LLEIVQAAAGSGLAVYTIWALLL) traverse the membrane as a helical segment. A methyltransferase (MTase) region spans residues 43–77 (QPGFRRVPLRLQVPYVGASARQVENVLSLLRGRPG). Positions 43–77 (QPGFRRVPLRLQVPYVGASARQVENVLSLLRGRPG) are pre-methyltransferase (preMT).

This sequence belongs to the ANT/ATPSC lysine N-methyltransferase family.

The protein localises to the mitochondrion membrane. It carries out the reaction L-lysyl-[protein] + 3 S-adenosyl-L-methionine = N(6),N(6),N(6)-trimethyl-L-lysyl-[protein] + 3 S-adenosyl-L-homocysteine + 3 H(+). Mitochondrial protein-lysine N-methyltransferase that trimethylates adenine nucleotide translocases ANT2/SLC25A5 and ANT3/SLC25A6, thereby regulating mitochondrial respiration. Probably also trimethylates ANT1/SLC25A4. This is Adenine nucleotide translocase lysine N-methyltransferase from Mus musculus (Mouse).